The primary structure comprises 196 residues: FMN-dependent NADH:quinone oxidoreductase (196 aa).

FMN-binding positions include serine 10 and serine 17–serine 19.

Belongs to the azoreductase type 1 family. Homodimer. The cofactor is FMN.

It carries out the reaction 2 a quinone + NADH + H(+) = 2 a 1,4-benzosemiquinone + NAD(+). The enzyme catalyses N,N-dimethyl-1,4-phenylenediamine + anthranilate + 2 NAD(+) = 2-(4-dimethylaminophenyl)diazenylbenzoate + 2 NADH + 2 H(+). Quinone reductase that provides resistance to thiol-specific stress caused by electrophilic quinones. Its function is as follows. Also exhibits azoreductase activity. Catalyzes the reductive cleavage of the azo bond in aromatic azo compounds to the corresponding amines. This is FMN-dependent NADH:quinone oxidoreductase from Metamycoplasma arthritidis (strain 158L3-1) (Mycoplasma arthritidis).